Reading from the N-terminus, the 631-residue chain is Phosphomethylpyrimidine synthase (631 aa).

Residues N239, M268, Y297, H333, 353 to 355 (SRG), 394 to 397 (DGLR), and E433 contribute to the substrate site. Residue H437 participates in Zn(2+) binding. Residue Y460 participates in substrate binding. Zn(2+) is bound at residue H501. 3 residues coordinate [4Fe-4S] cluster: C581, C584, and C589.

This sequence belongs to the ThiC family. Homodimer. [4Fe-4S] cluster serves as cofactor.

It catalyses the reaction 5-amino-1-(5-phospho-beta-D-ribosyl)imidazole + S-adenosyl-L-methionine = 4-amino-2-methyl-5-(phosphooxymethyl)pyrimidine + CO + 5'-deoxyadenosine + formate + L-methionine + 3 H(+). It functions in the pathway cofactor biosynthesis; thiamine diphosphate biosynthesis. Its function is as follows. Catalyzes the synthesis of the hydroxymethylpyrimidine phosphate (HMP-P) moiety of thiamine from aminoimidazole ribotide (AIR) in a radical S-adenosyl-L-methionine (SAM)-dependent reaction. This chain is Phosphomethylpyrimidine synthase, found in Escherichia fergusonii (strain ATCC 35469 / DSM 13698 / CCUG 18766 / IAM 14443 / JCM 21226 / LMG 7866 / NBRC 102419 / NCTC 12128 / CDC 0568-73).